Here is a 309-residue protein sequence, read N- to C-terminus: Olfactory receptor 7A10 (309 aa).

Over 1 to 25 the chain is Extracellular; sequence MKSWNNTIILEFLLLGISEEPELQA. N-linked (GlcNAc...) asparagine glycosylation occurs at Asn-5. Residues 26–46 traverse the membrane as a helical segment; the sequence is FLFGLFLSMYLVTVLGNLLII. At 47–54 the chain is on the cytoplasmic side; sequence LATISDSH. The helical transmembrane segment at 55–75 threads the bilayer; that stretch reads LHTPMYFFLSNLSFVDICFVS. Topologically, residues 76 to 99 are extracellular; that stretch reads TTVPKMLVNIQTHNKVITYAGCIT. The cysteines at positions 97 and 189 are disulfide-linked. Residues 100-120 form a helical membrane-spanning segment; the sequence is QMCFFLLFVGLDNFLLTVMAY. Topologically, residues 121–139 are cytoplasmic; it reads DRFVAICHPLHYMVIMNPQ. A helical transmembrane segment spans residues 140-160; the sequence is LCGLLVLASWIMSVLNSMLQS. The Extracellular segment spans residues 161–197; the sequence is LMVLPLPFCTHMEIPHFFCEINQVVHLACSDTFLNDI. A helical transmembrane segment spans residues 198 to 217; sequence VMYFAVALLGGGPLTGILYS. Residues 218 to 237 are Cytoplasmic-facing; the sequence is YSKIVSSIRAISSAQGKYKA. A helical membrane pass occupies residues 238–258; sequence FSTCASHLSVVSLFYGTCLGV. Over 259 to 271 the chain is Extracellular; it reads YLSSAATHNSHTG. The helical transmembrane segment at 272 to 292 threads the bilayer; that stretch reads AAASVMYTVVTPMLNPFIYSL. The Cytoplasmic segment spans residues 293–309; the sequence is RNKHIKGAMKTFFRGKQ.

Belongs to the G-protein coupled receptor 1 family.

The protein resides in the cell membrane. Its function is as follows. Odorant receptor. This is Olfactory receptor 7A10 (OR7A10) from Homo sapiens (Human).